The chain runs to 398 residues: Cytochrome b561 and DOMON domain-containing protein At3g61750 (398 aa).

Positions 1-23 (MKTLVGFYILCFLIGQDLPFLAA) are cleaved as a signal peptide. The region spanning 64–177 (NTFVLRYSEN…PRRAVILAFS (114 aa)) is the DOMON domain. Residues 184–377 (LGRLTKHDDK…LEIFRIRGTI (194 aa)) form the Cytochrome b561 domain. His220 contributes to the heme b binding site. The next 2 membrane-spanning stretches (helical) occupy residues 222–242 (VMAI…ARYL) and 252–272 (LHIG…ILGI). Heme b is bound by residues His253 and His285. Transmembrane regions (helical) follow at residues 287 to 307 (GIGI…FARP), 320 to 340 (YHHW…VLGI), and 351 to 371 (KIGY…LEIF). Residue His321 coordinates heme b.

Heme b is required as a cofactor.

The protein localises to the membrane. Its function is as follows. May act as a catecholamine-responsive trans-membrane electron transporter. The sequence is that of Cytochrome b561 and DOMON domain-containing protein At3g61750 from Arabidopsis thaliana (Mouse-ear cress).